The chain runs to 486 residues: Protein nucleotidyltransferase YdiU (486 aa).

Residues Gly90, Gly92, Arg93, Lys113, Asp125, Gly126, Arg176, and Arg183 each contribute to the ATP site. Asp252 (proton acceptor) is an active-site residue. Positions 253 and 262 each coordinate Mg(2+). Asp262 contributes to the ATP binding site.

This sequence belongs to the SELO family. Mg(2+) is required as a cofactor. The cofactor is Mn(2+).

The catalysed reaction is L-seryl-[protein] + ATP = 3-O-(5'-adenylyl)-L-seryl-[protein] + diphosphate. It carries out the reaction L-threonyl-[protein] + ATP = 3-O-(5'-adenylyl)-L-threonyl-[protein] + diphosphate. The enzyme catalyses L-tyrosyl-[protein] + ATP = O-(5'-adenylyl)-L-tyrosyl-[protein] + diphosphate. It catalyses the reaction L-histidyl-[protein] + UTP = N(tele)-(5'-uridylyl)-L-histidyl-[protein] + diphosphate. The catalysed reaction is L-seryl-[protein] + UTP = O-(5'-uridylyl)-L-seryl-[protein] + diphosphate. It carries out the reaction L-tyrosyl-[protein] + UTP = O-(5'-uridylyl)-L-tyrosyl-[protein] + diphosphate. In terms of biological role, nucleotidyltransferase involved in the post-translational modification of proteins. It can catalyze the addition of adenosine monophosphate (AMP) or uridine monophosphate (UMP) to a protein, resulting in modifications known as AMPylation and UMPylation. This Pseudomonas entomophila (strain L48) protein is Protein nucleotidyltransferase YdiU.